Reading from the N-terminus, the 174-residue chain is FMN-dependent NADPH-azoreductase (174 aa).

Residues 9 to 11 (TPR), 15 to 16 (RT), 73 to 76 (EYHS), and G106 each bind FMN.

The protein belongs to the azoreductase type 2 family. In terms of assembly, homotetramer. Requires FMN as cofactor.

In terms of biological role, catalyzes the reductive cleavage of azo bond in aromatic azo compounds to the corresponding amines. Requires NADPH, but not NADH, as an electron donor for its activity. The polypeptide is FMN-dependent NADPH-azoreductase (azr) (Bacillus subtilis (strain 168)).